We begin with the raw amino-acid sequence, 128 residues long: Cyclin-dependent protein kinase inhibitor SMR1 (128 aa).

The disordered stretch occupies residues 17 to 74 (PIKIRSKTSKTKKDEGDDDEDDLRCSTPTSQEHKIPAVVDSPPPPPRKPRPPPSAPSA). A compositionally biased stretch (pro residues) spans 57-71 (SPPPPPRKPRPPPSA).

Interacts with CDKB1-1. Interacts with CPR5. Expressed in roots, leaves, stems, siliques and flowers. Expressed in the root elongation zone.

The protein resides in the nucleus. Its function is as follows. Probable cyclin-dependent protein kinase (CDK) inhibitor that functions as a repressor of mitosis in the endoreduplication cell cycle. Cooperates with SIM and SMR2 to promote endoreplication during leaf development. Specifically regulates endoreduplication in epidermal pavement cells to produce the cell size pattern. Is necessary for giant cell formation. Positive regulator of effector-triggered immunity (ETI). This chain is Cyclin-dependent protein kinase inhibitor SMR1, found in Arabidopsis thaliana (Mouse-ear cress).